Consider the following 154-residue polypeptide: Photosystem II extrinsic protein U, chloroplastic (154 aa).

Residues 1 to 36 (MAFISTPLGKVTVKSATVSANRRGLRMQSDSEPVVS) constitute a chloroplast transit peptide. A thylakoid-targeting transit peptide spans 37–61 (RRALLSGALAAAVAAALARARPAQA).

Belongs to the PsbU family. As to quaternary structure, PSII is composed of 1 copy each of membrane proteins PsbA, PsbB, PsbC, PsbD, PsbE, PsbF, PsbH, PsbI, PsbJ, PsbK, PsbL, PsbM, PsbT, PsbY, PsbZ, Psb30/Ycf12, at least 3 peripheral proteins of the oxygen-evolving complex and a large number of cofactors. It forms dimeric complexes. The extrinsic subunits in red algae are PsbO (OEC33), PsbQ', cytochrome c-550 and PsbU. Post-translationally, predicted to be translocated into the thylakoid lumen by the Tat system. The position of the first transit peptide cleavage has not been experimentally proven.

The protein localises to the plastid. It is found in the chloroplast thylakoid membrane. Its function is as follows. One of the extrinsic, lumenal subunits of photosystem II (PSII). PSII is a light-driven water plastoquinone oxidoreductase, using light energy to abstract electrons from H(2)O, generating a proton gradient subsequently used for ATP formation. The extrinsic proteins stabilize the structure of photosystem II oxygen-evolving complex (OEC), the ion environment of oxygen evolution and protect the OEC against heat-induced inactivation. The protein is Photosystem II extrinsic protein U, chloroplastic of Cyanidium caldarium (Red alga).